A 313-amino-acid polypeptide reads, in one-letter code: Transcription factor MafB (313 aa).

2 disordered regions span residues 51-77 (QPTG…FSPT) and 151-197 (MGLP…VEDR). A compositionally biased stretch (low complexity) spans 55–76 (SVSSTPISTPCSSVPSSPSFSP). The segment covering 154–166 (PHHHPHHHQHQHH) has biased composition (basic residues). Low complexity predominate over residues 167–192 (QTSPSPSGSSSSSQQLHHQQQHSSSS). Residues 225-250 (RLKQKRRTLKNRGYAQSCRYKRVQQK) are basic motif. Positions 225 to 288 (RLKQKRRTLK…DAYKIKCEKL (64 aa)) constitute a bZIP domain. The tract at residues 253-274 (LEGEKTQLVQQVEQLKQEVSRL) is leucine-zipper. Residues 292–313 (NSSNFREAGSTSDNPSSPEFFM) are disordered.

Belongs to the bZIP family. Maf subfamily. As to quaternary structure, homodimer or heterodimer with other bHLH-Zip transcription factors. Binds DNA as a homodimer or a heterodimer.

The protein localises to the nucleus. In terms of biological role, acts as a transcriptional activator or repressor. Implicated in the regulation of cell-type specific gene expression and play a role in inductive events during lens development. The protein is Transcription factor MafB (mafb) of Xenopus laevis (African clawed frog).